The chain runs to 319 residues: Large ribosomal subunit protein uL10 (319 aa).

Positions 286–295 are enriched in low complexity; it reads ADSGAAAPSA. Residues 286 to 319 form a disordered region; the sequence is ADSGAAAPSAAKEEEKKEEPEEESDGDLGMSLFD.

The protein belongs to the universal ribosomal protein uL10 family. P0 forms a pentameric complex by interaction with dimers of P1 and P2. Interacts with NSF. Post-translationally, phosphorylated. In terms of tissue distribution, highly expressed in stems, inflorescences and immature seeds (at protein level). Expressed in leaves and mature seeds (at protein level).

Ribosomal protein P0 is the functional equivalent of E.coli protein L10. This is Large ribosomal subunit protein uL10 from Oryza sativa subsp. japonica (Rice).